Here is a 185-residue protein sequence, read N- to C-terminus: Avirulence protein ATR39-1 (185 aa).

Residues 1 to 20 (MVKCTPLLALTVIVSAGSDA) form the signal peptide. The RxLR-dEER motif lies at 49-66 (RVLRASDVPDEVAAGESR).

Belongs to the RxLR effector family.

It is found in the secreted. It localises to the host cell. In terms of biological role, secreted effector that acts as an elicitor of hypersensitive response (HR) specifically on plants carrying defense protein RPP39. The allele ATR39-1 is recognized by RPP39, whereas the ATR39-2 allele is not recognized. The chain is Avirulence protein ATR39-1 from Hyaloperonospora arabidopsidis (strain Emoy2) (Downy mildew agent).